A 631-amino-acid chain; its full sequence is Alpha-dioxygenase 2 (631 aa).

A signal peptide spans 1–20 (MGFSPSSSWFLHPQLHHVVS). Residue His-157 participates in heme b binding. Tyr-378 (proton acceptor) is an active-site residue. His-381 contacts heme b. Asn-583 carries an N-linked (GlcNAc...) asparagine glycan.

It belongs to the peroxidase family. Heme b serves as cofactor. As to expression, expressed in seedlings (cotyledons, young leaves, and hypocotyls), flowers, siliques and old leaves.

Its function is as follows. Alpha-dioxygenase that catalyzes the primary oxygenation of fatty acids into oxylipins. May be involved in the senescence process. The polypeptide is Alpha-dioxygenase 2 (DOX2) (Arabidopsis thaliana (Mouse-ear cress)).